Consider the following 577-residue polypeptide: Vacuolar protein sorting-associated protein 45 (577 aa).

The protein belongs to the STXBP/unc-18/SEC1 family. Interacts with PEP7 and TLG2.

The protein resides in the cytoplasm. It localises to the vacuole membrane. In terms of biological role, essential for vacuolar protein sorting. Function in membrane traffic between the Golgi and the vacuole. The sequence is that of Vacuolar protein sorting-associated protein 45 (VPS45) from Saccharomyces cerevisiae (strain ATCC 204508 / S288c) (Baker's yeast).